The sequence spans 187 residues: MAITEPILKEAQERMKKAEAALQRELGNIRAGRANASLLNRISADYYGAQTPLNQMAAITVPEPRVLMVTPFDKSALKEIEKAILASDLGISPANDGSAIRLVIPQLTEERRKELAKDVKAEGERAKVAVRNVRRDAMEALKKGHKDGQFTDDQLHQLEDQAQKLTDQAGKDVDAIVADKEKEILEG.

It belongs to the RRF family.

The protein resides in the cytoplasm. In terms of biological role, responsible for the release of ribosomes from messenger RNA at the termination of protein biosynthesis. May increase the efficiency of translation by recycling ribosomes from one round of translation to another. The chain is Ribosome-recycling factor from Lactiplantibacillus plantarum (strain ATCC BAA-793 / NCIMB 8826 / WCFS1) (Lactobacillus plantarum).